The chain runs to 342 residues: Inositol 2-dehydrogenase 2 (342 aa).

Belongs to the Gfo/Idh/MocA family. Homotetramer.

The catalysed reaction is myo-inositol + NAD(+) = scyllo-inosose + NADH + H(+). Involved in the oxidation of myo-inositol (MI) to 2-keto-myo-inositol (2KMI or 2-inosose). The chain is Inositol 2-dehydrogenase 2 from Mycolicibacterium vanbaalenii (strain DSM 7251 / JCM 13017 / BCRC 16820 / KCTC 9966 / NRRL B-24157 / PYR-1) (Mycobacterium vanbaalenii).